The chain runs to 236 residues: MNSLSYLNHAQQAFPPPEQALIEPNGLLAVGGDLHPERLLNAYYNGIFPWFNLDDPILWWSPDPRAVFVPGNMKISRSLVKYLKKQNWTYTINHAFEAVTAGCAEPRAGQDGTWISSEIQQAYLSLHHQGHAHSLEVWQNNELIGGLYGLAIGQVFCGESMFHRTTNASKAAMIVLQQHLQRCGFKLIDAQVVNPHLDSLGAKSIKRDDFLRLLAHLRDGTVSLDSWRKSEVTIEL.

This sequence belongs to the L/F-transferase family.

It is found in the cytoplasm. The enzyme catalyses N-terminal L-lysyl-[protein] + L-leucyl-tRNA(Leu) = N-terminal L-leucyl-L-lysyl-[protein] + tRNA(Leu) + H(+). It catalyses the reaction N-terminal L-arginyl-[protein] + L-leucyl-tRNA(Leu) = N-terminal L-leucyl-L-arginyl-[protein] + tRNA(Leu) + H(+). It carries out the reaction L-phenylalanyl-tRNA(Phe) + an N-terminal L-alpha-aminoacyl-[protein] = an N-terminal L-phenylalanyl-L-alpha-aminoacyl-[protein] + tRNA(Phe). Functionally, functions in the N-end rule pathway of protein degradation where it conjugates Leu, Phe and, less efficiently, Met from aminoacyl-tRNAs to the N-termini of proteins containing an N-terminal arginine or lysine. This is Leucyl/phenylalanyl-tRNA--protein transferase from Shewanella pealeana (strain ATCC 700345 / ANG-SQ1).